The chain runs to 81 residues: RNA-binding protein Hfq (81 aa).

Residues 10–69 (DPFLNTLRKEHIPVSIYLVNGIKLQGHIDSFDQYVVLLKNTVTQMVYKHAISTVVPARAV) enclose the Sm domain.

This sequence belongs to the Hfq family. Homohexamer.

Functionally, RNA chaperone that binds small regulatory RNA (sRNAs) and mRNAs to facilitate mRNA translational regulation in response to envelope stress, environmental stress and changes in metabolite concentrations. Also binds with high specificity to tRNAs. The sequence is that of RNA-binding protein Hfq from Nitrosospira multiformis (strain ATCC 25196 / NCIMB 11849 / C 71).